Here is a 279-residue protein sequence, read N- to C-terminus: Protease HtpX homolog (279 aa).

Transmembrane regions (helical) follow at residues Thr-6–Gly-26 and Gly-28–Ser-48. His-127 provides a ligand contact to Zn(2+). Glu-128 is a catalytic residue. A Zn(2+)-binding site is contributed by His-131. Helical transmembrane passes span Ile-137 to Ala-157 and Leu-177 to Ile-197. Glu-202 contacts Zn(2+).

It belongs to the peptidase M48B family. Zn(2+) is required as a cofactor.

The protein resides in the cell inner membrane. The chain is Protease HtpX homolog from Syntrophotalea carbinolica (strain DSM 2380 / NBRC 103641 / GraBd1) (Pelobacter carbinolicus).